The sequence spans 305 residues: Cell division control protein 2 homolog C (305 aa).

The region spanning 4–297 (YEKLEKVGEG…AKAALDHPYF (294 aa)) is the Protein kinase domain. ATP is bound by residues 10-18 (VGEGTYGKV) and lysine 33. Residue threonine 14 is modified to Phosphothreonine. Tyrosine 15 bears the Phosphotyrosine mark. The active-site Proton acceptor is aspartate 138. Residue threonine 172 is modified to Phosphothreonine; by CAK.

This sequence belongs to the protein kinase superfamily. CMGC Ser/Thr protein kinase family. CDC2/CDKX subfamily.

It catalyses the reaction L-seryl-[protein] + ATP = O-phospho-L-seryl-[protein] + ADP + H(+). The catalysed reaction is L-threonyl-[protein] + ATP = O-phospho-L-threonyl-[protein] + ADP + H(+). It carries out the reaction [DNA-directed RNA polymerase] + ATP = phospho-[DNA-directed RNA polymerase] + ADP + H(+). Functionally, plays a key role in the control of the eukaryotic cell cycle. The sequence is that of Cell division control protein 2 homolog C (CDC2C) from Antirrhinum majus (Garden snapdragon).